The sequence spans 292 residues: Ribosomal RNA small subunit methyltransferase A (292 aa).

Positions 28, 30, 55, 76, 101, and 126 each coordinate S-adenosyl-L-methionine.

The protein belongs to the class I-like SAM-binding methyltransferase superfamily. rRNA adenine N(6)-methyltransferase family. RsmA subfamily.

It is found in the cytoplasm. It catalyses the reaction adenosine(1518)/adenosine(1519) in 16S rRNA + 4 S-adenosyl-L-methionine = N(6)-dimethyladenosine(1518)/N(6)-dimethyladenosine(1519) in 16S rRNA + 4 S-adenosyl-L-homocysteine + 4 H(+). In terms of biological role, specifically dimethylates two adjacent adenosines (A1518 and A1519) in the loop of a conserved hairpin near the 3'-end of 16S rRNA in the 30S particle. May play a critical role in biogenesis of 30S subunits. This chain is Ribosomal RNA small subunit methyltransferase A, found in Bacillus cereus (strain G9842).